The following is a 304-amino-acid chain: Probable cobalamin biosynthesis protein CobD (304 aa).

A run of 5 helical transmembrane segments spans residues 2–22 (IVVL…KEYI), 50–70 (ILFS…AVYL), 73–93 (FILV…FSIT), 147–167 (VDGY…GAFI), and 284–304 (AAYS…AVFL).

The protein belongs to the CobD/CbiB family.

It localises to the cell membrane. It functions in the pathway cofactor biosynthesis; adenosylcobalamin biosynthesis. Converts cobyric acid to cobinamide by the addition of aminopropanol on the F carboxylic group. This chain is Probable cobalamin biosynthesis protein CobD, found in Thermoplasma volcanium (strain ATCC 51530 / DSM 4299 / JCM 9571 / NBRC 15438 / GSS1).